A 71-amino-acid chain; its full sequence is Cell division protein ZapB (71 aa).

Residues 5–67 are a coiled coil; it reads LEVLEQLESK…RALLGKMDQM (63 aa).

The protein belongs to the ZapB family. Homodimer. The ends of the coiled-coil dimer bind to each other, forming polymers. Interacts with FtsZ.

It localises to the cytoplasm. Its function is as follows. Non-essential, abundant cell division factor that is required for proper Z-ring formation. It is recruited early to the divisome by direct interaction with FtsZ, stimulating Z-ring assembly and thereby promoting cell division earlier in the cell cycle. Its recruitment to the Z-ring requires functional FtsA or ZipA. In Aeromonas hydrophila subsp. hydrophila (strain ATCC 7966 / DSM 30187 / BCRC 13018 / CCUG 14551 / JCM 1027 / KCTC 2358 / NCIMB 9240 / NCTC 8049), this protein is Cell division protein ZapB.